The primary structure comprises 292 residues: Elongation factor Ts (292 aa).

The interval 80-83 is involved in Mg(2+) ion dislocation from EF-Tu; sequence TDFV.

The protein belongs to the EF-Ts family.

It localises to the cytoplasm. Its function is as follows. Associates with the EF-Tu.GDP complex and induces the exchange of GDP to GTP. It remains bound to the aminoacyl-tRNA.EF-Tu.GTP complex up to the GTP hydrolysis stage on the ribosome. This chain is Elongation factor Ts, found in Cupriavidus necator (strain ATCC 17699 / DSM 428 / KCTC 22496 / NCIMB 10442 / H16 / Stanier 337) (Ralstonia eutropha).